The sequence spans 367 residues: D-alanine--D-alanine ligase (367 aa).

In terms of domain architecture, ATP-grasp spans lysine 139–serine 340. Lysine 169 to asparagine 224 contributes to the ATP binding site. Residues aspartate 298, glutamate 311, and asparagine 313 each contribute to the Mg(2+) site.

The protein belongs to the D-alanine--D-alanine ligase family. Mg(2+) is required as a cofactor. Mn(2+) serves as cofactor.

It localises to the cytoplasm. It carries out the reaction 2 D-alanine + ATP = D-alanyl-D-alanine + ADP + phosphate + H(+). It participates in cell wall biogenesis; peptidoglycan biosynthesis. In terms of biological role, cell wall formation. The chain is D-alanine--D-alanine ligase from Thermosipho africanus (strain TCF52B).